Reading from the N-terminus, the 196-residue chain is Ribonuclease HII (196 aa).

Residues Met1–Leu196 form the RNase H type-2 domain. Positions 7, 8, and 103 each coordinate a divalent metal cation.

The protein belongs to the RNase HII family. Mn(2+) is required as a cofactor. Mg(2+) serves as cofactor.

The protein resides in the cytoplasm. It catalyses the reaction Endonucleolytic cleavage to 5'-phosphomonoester.. Its function is as follows. Endonuclease that specifically degrades the RNA of RNA-DNA hybrids. The polypeptide is Ribonuclease HII (Novosphingobium aromaticivorans (strain ATCC 700278 / DSM 12444 / CCUG 56034 / CIP 105152 / NBRC 16084 / F199)).